The following is a 141-amino-acid chain: Large ribosomal subunit protein uL11c (141 aa).

This sequence belongs to the universal ribosomal protein uL11 family. Part of the ribosomal stalk of the 50S ribosomal subunit. Interacts with L10 and the large rRNA to form the base of the stalk. L10 forms an elongated spine to which L12 dimers bind in a sequential fashion forming a multimeric L10(L12)X complex.

It is found in the plastid. The protein resides in the chloroplast. In terms of biological role, forms part of the ribosomal stalk which helps the ribosome interact with GTP-bound translation factors. This chain is Large ribosomal subunit protein uL11c, found in Thalassiosira pseudonana (Marine diatom).